We begin with the raw amino-acid sequence, 263 residues long: Stress-response A/B barrel domain-containing protein UP3 (263 aa).

Stress-response A/B barrel domains follow at residues 49 to 142 (IEHI…AVDW) and 158 to 252 (VAKL…VVEF). A Peroxisomal targeting signal motif is present at residues 261-263 (SSL).

As to quaternary structure, homodimer.

The protein resides in the peroxisome. Its function is as follows. Involved in stress response. The sequence is that of Stress-response A/B barrel domain-containing protein UP3 from Arabidopsis thaliana (Mouse-ear cress).